Here is a 350-residue protein sequence, read N- to C-terminus: tRNA N6-adenosine threonylcarbamoyltransferase (350 aa).

Positions 109 and 113 each coordinate Fe cation. Residues Thr-136 to Gly-140, Asp-169, Gly-182, Asp-186, and Asn-284 contribute to the substrate site. Asp-312 provides a ligand contact to Fe cation.

This sequence belongs to the KAE1 / TsaD family. Fe(2+) serves as cofactor.

The protein localises to the cytoplasm. It carries out the reaction L-threonylcarbamoyladenylate + adenosine(37) in tRNA = N(6)-L-threonylcarbamoyladenosine(37) in tRNA + AMP + H(+). In terms of biological role, required for the formation of a threonylcarbamoyl group on adenosine at position 37 (t(6)A37) in tRNAs that read codons beginning with adenine. Is involved in the transfer of the threonylcarbamoyl moiety of threonylcarbamoyl-AMP (TC-AMP) to the N6 group of A37, together with TsaE and TsaB. TsaD likely plays a direct catalytic role in this reaction. This chain is tRNA N6-adenosine threonylcarbamoyltransferase, found in Chlorobium chlorochromatii (strain CaD3).